A 304-amino-acid chain; its full sequence is MSHGPTRKHTALPKAQILIEALPWLTRHNGKTVVVKFGGNAMIDEELKAAFAQDIVFLHHAGLKPVVVHGGGPQISAALDRHGIVSEFKAGLRVTTEDAMDVVRMVLAGQVQRELVGLLNQHGPLAVGLTGEDAHTITATKHQPEIDGELVDIGRVGEITEIDTGAIEALLADGRIPVVSSIARSQDDGHVYNVNADTAAAALAAALGAETLMVLTDVEGLYEDWPDSDEVISRLTASELEKLLPELASGMVPKMEGCLHAVRNGVTTARVIDGRVQHSILLEIFTDEGIGTMVVPDEEEGDAV.

Residues 71-72, R93, and N193 each bind substrate; that span reads GG.

Belongs to the acetylglutamate kinase family. ArgB subfamily.

It is found in the cytoplasm. The enzyme catalyses N-acetyl-L-glutamate + ATP = N-acetyl-L-glutamyl 5-phosphate + ADP. It functions in the pathway amino-acid biosynthesis; L-arginine biosynthesis; N(2)-acetyl-L-ornithine from L-glutamate: step 2/4. Catalyzes the ATP-dependent phosphorylation of N-acetyl-L-glutamate. This is Acetylglutamate kinase from Streptomyces avermitilis (strain ATCC 31267 / DSM 46492 / JCM 5070 / NBRC 14893 / NCIMB 12804 / NRRL 8165 / MA-4680).